Here is a 182-residue protein sequence, read N- to C-terminus: Large ribosomal subunit protein uL6 (182 aa).

It belongs to the universal ribosomal protein uL6 family. Part of the 50S ribosomal subunit.

Functionally, this protein binds to the 23S rRNA, and is important in its secondary structure. It is located near the subunit interface in the base of the L7/L12 stalk, and near the tRNA binding site of the peptidyltransferase center. The sequence is that of Large ribosomal subunit protein uL6 from Trichormus variabilis (strain ATCC 29413 / PCC 7937) (Anabaena variabilis).